The primary structure comprises 342 residues: MVSVTRTVFGELPSGGGAVEKFQLRSDQLNVDIISWGCTITALQVKDRQGKASDVVLGFAELEGYLQKQPYFGAVVGRVANRIAKGRFTVDGKEYHLPINREPNSLHGGFRGFDKVLWTPQVLSNGVQFSRVSPDGEEGYPGELKVWVTYTLDGGELVVNYRAQASQTTPVNLTNHSYFNLAGQGSPDIYDHEVTIAADAYLPVDETLIPTGVIAPVEGTAFDLRKPVELGKHLQSYHIHGFDHNFCLKESKEKKFCARVHHAASGRILEVYTTQPGVQFYTGNFLDGTLKGKSGEVYPKHSGFCLETQNWPDAVNQPQFPPILLRPGEEYNHTTWFKFSVA.

The residue at position 14 (Ser-14) is a Phosphoserine. Residues 81 to 82 (NR) and His-107 each bind beta-D-galactose. Ser-124 bears the Phosphoserine mark. Catalysis depends on His-176, which acts as the Proton donor. Beta-D-galactose-binding positions include 176-178 (HSY), Asp-243, Gln-279, and Glu-307. Glu-307 functions as the Proton acceptor in the catalytic mechanism.

Belongs to the aldose epimerase family. As to quaternary structure, monomer.

Its subcellular location is the cytoplasm. The catalysed reaction is alpha-D-galactose = beta-D-galactose. The enzyme catalyses alpha-D-glucose = beta-D-glucose. It participates in carbohydrate metabolism; hexose metabolism. It functions in the pathway carbohydrate metabolism; galactose metabolism. Functionally, mutarotase that catalyzes the interconversion of beta-D-galactose and alpha-D-galactose during galactose metabolism. Beta-D-galactose is metabolized in the liver into glucose 1-phosphate, the primary metabolic fuel, by the action of four enzymes that constitute the Leloir pathway: GALM, GALK1 (galactokinase), GALT (galactose-1-phosphate uridylyltransferase) and GALE (UDP-galactose-4'-epimerase). Involved in the maintenance of the equilibrium between the beta- and alpha-anomers of galactose, therefore ensuring a sufficient supply of the alpha-anomer for GALK1. Also active on D-glucose although shows a preference for galactose over glucose. In Rattus norvegicus (Rat), this protein is Galactose mutarotase (Galm).